Consider the following 244-residue polypeptide: Osmotin-like protein OSM34 (244 aa).

The N-terminal stretch at Met1–Ala22 is a signal peptide. 8 disulfide bridges follow: Cys31/Cys222, Cys72/Cys82, Cys87/Cys93, Cys138/Cys212, Cys143/Cys195, Cys151/Cys161, Cys165/Cys174, and Cys175/Cys182.

This sequence belongs to the thaumatin family.

In Arabidopsis thaliana (Mouse-ear cress), this protein is Osmotin-like protein OSM34 (OSM34).